A 392-amino-acid chain; its full sequence is MEETRGISDPENGSSSYGGKPPNPLSFSSSSAAAAVYRQTFDGERSLAPCNKRSLVRHSSLVKTMVSDISVENEFTIEKNKSEFVPATRSGAWSDIGSRSSMEDAYLCVDNFMDSFGLLNSEAGPSAFYGVFDGHGGKHAAEFACHHIPRYIVEDQEFPSEINKVLSSAFLQTDTAFLEACSLDGSLASGTTALAAILFGRSLVVANAGDCRAVLSRQGKAIEMSRDHKPMSSKERRRIEASGGHVFDGYLNGQLNVARALGDFHMEGMKKKKDGSDCGPLIAEPELMTTKLTEEDEFLIIGCDGVWDVFMSQNAVDFARRRLQEHNDPVMCSKELVEEALKRKSADNVTAVVVCLQPQPPPNLVAPRLRVHRSFSAEGLKDLQSYLDGLGN.

Residues 1–26 (MEETRGISDPENGSSSYGGKPPNPLS) form a disordered region. The PPM-type phosphatase domain maps to 89–356 (RSGAWSDIGS…DNVTAVVVCL (268 aa)). The Mn(2+) site is built by Asp-133, Gly-134, Asp-304, and Asp-347.

Belongs to the PP2C family. Requires Mg(2+) as cofactor. Mn(2+) serves as cofactor.

The catalysed reaction is O-phospho-L-seryl-[protein] + H2O = L-seryl-[protein] + phosphate. It catalyses the reaction O-phospho-L-threonyl-[protein] + H2O = L-threonyl-[protein] + phosphate. The polypeptide is Probable protein phosphatase 2C 22 (Arabidopsis thaliana (Mouse-ear cress)).